The primary structure comprises 289 residues: YLVNPAAYAALGAYMFLLILIGFPINFLTLYVTLEHKKLRTPLNYILLNLAVANLFMVLGGFTTTMYTSMHGYFVLGRLGCNLEAFFATLGGEIALWSLVVLAIERWIVVCKPISNFRFTEDHAIMGLAFTWVMALACAVPPLVGWSRYIPEGMQCSCGVDYYTRAEGFNNESFVIYMFIVHFLIPLSVIFFCYGRLLCAVKEAPAAQQESETTQRAEKEVSRMVVIMVIGFLVCWLPYASVAWWIFCNQGSDFGPIFMTLPSFFAKSAAIYNPMIYICMNKQFRHCMI.

Topologically, residues 1-7 (YLVNPAA) are extracellular. The helical transmembrane segment at 8–32 (YAALGAYMFLLILIGFPINFLTLYV) threads the bilayer. The Cytoplasmic portion of the chain corresponds to 33 to 44 (TLEHKKLRTPLN). Residues 45 to 67 (YILLNLAVANLFMVLGGFTTTMY) form a helical membrane-spanning segment. Topologically, residues 68–81 (TSMHGYFVLGRLGC) are extracellular. An intrachain disulfide couples Cys81 to Cys158. A helical transmembrane segment spans residues 82–104 (NLEAFFATLGGEIALWSLVVLAI). Residues 105 to 107 (ERW) carry the 'Ionic lock' involved in activated form stabilization motif. Residues 105 to 123 (ERWIVVCKPISNFRFTEDH) are Cytoplasmic-facing. The helical transmembrane segment at 124–144 (AIMGLAFTWVMALACAVPPLV) threads the bilayer. Residues 145–173 (GWSRYIPEGMQCSCGVDYYTRAEGFNNES) lie on the Extracellular side of the membrane. Residue Asn171 is glycosylated (N-linked (GlcNAc...) asparagine). The chain crosses the membrane as a helical span at residues 174–195 (FVIYMFIVHFLIPLSVIFFCYG). Topologically, residues 196–223 (RLLCAVKEAPAAQQESETTQRAEKEVSR) are cytoplasmic. Residues 224 to 245 (MVVIMVIGFLVCWLPYASVAWW) traverse the membrane as a helical segment. Residues 246–257 (IFCNQGSDFGPI) lie on the Extracellular side of the membrane. The chain crosses the membrane as a helical span at residues 258 to 279 (FMTLPSFFAKSAAIYNPMIYIC). Lys267 carries the post-translational modification N6-(retinylidene)lysine. Residues 280–289 (MNKQFRHCMI) are Cytoplasmic-facing.

The protein belongs to the G-protein coupled receptor 1 family. Opsin subfamily. In terms of processing, phosphorylated on some or all of the serine and threonine residues present in the C-terminal region. Contains one covalently linked retinal chromophore.

The protein resides in the membrane. It localises to the cell projection. It is found in the cilium. The protein localises to the photoreceptor outer segment. Its function is as follows. Photoreceptor required for image-forming vision at low light intensity. While most salt water fish species use retinal as chromophore, most freshwater fish use 3-dehydroretinal, or a mixture of retinal and 3-dehydroretinal. Light-induced isomerization of 11-cis to all-trans retinal triggers a conformational change that activates signaling via G-proteins. Subsequent receptor phosphorylation mediates displacement of the bound G-protein alpha subunit by arrestin and terminates signaling. The protein is Rhodopsin (rho) of Abyssocottus korotneffi (Baikalian deep-water sculpin).